We begin with the raw amino-acid sequence, 309 residues long: Oxygen-dependent coproporphyrinogen-III oxidase (309 aa).

Position 94 (Ser94) interacts with substrate. A divalent metal cation is bound by residues His98 and His108. The Proton donor role is filled by His108. Residue 110–112 (NVR) participates in substrate binding. Positions 147 and 177 each coordinate a divalent metal cation. The interval 242–277 (YVEFNLVWDRGTLFGLQTGGRTESILMSLPPLVRWE) is important for dimerization. 260 to 262 (GGR) provides a ligand contact to substrate.

This sequence belongs to the aerobic coproporphyrinogen-III oxidase family. In terms of assembly, homodimer. The cofactor is a divalent metal cation.

It localises to the cytoplasm. The catalysed reaction is coproporphyrinogen III + O2 + 2 H(+) = protoporphyrinogen IX + 2 CO2 + 2 H2O. It participates in porphyrin-containing compound metabolism; protoporphyrin-IX biosynthesis; protoporphyrinogen-IX from coproporphyrinogen-III (O2 route): step 1/1. Functionally, involved in the heme biosynthesis. Catalyzes the aerobic oxidative decarboxylation of propionate groups of rings A and B of coproporphyrinogen-III to yield the vinyl groups in protoporphyrinogen-IX. This Yersinia pestis bv. Antiqua (strain Antiqua) protein is Oxygen-dependent coproporphyrinogen-III oxidase.